Consider the following 113-residue polypeptide: Replication initiation control protein YabA (113 aa).

4 residues coordinate Zn(2+): H88, C90, C104, and C107.

This sequence belongs to the YabA family. In terms of assembly, homotetramer. Interacts with both DnaA and DnaN, acting as a bridge between these two proteins. Zn(2+) serves as cofactor.

Its subcellular location is the cytoplasm. The protein resides in the nucleoid. Its function is as follows. Involved in control of chromosome replication initiation. Inhibits the cooperative binding of DnaA to the oriC region, thus negatively regulating initiation of chromosome replication. Inhibits the ability of DnaA-ATP to form a helix on DNA; does not disassemble preformed DnaA-DNA helices. Decreases the residence time of DnaA on the chromosome at its binding sites (oriC, replication forks and promoter-binding sites). Tethers DnaA to the replication machinery via the DNA polymerase beta sliding clamp subunit (dnaN). Associates with oriC and other DnaA targets on the chromosome in a DnaA-dependent manner. The chain is Replication initiation control protein YabA from Staphylococcus saprophyticus subsp. saprophyticus (strain ATCC 15305 / DSM 20229 / NCIMB 8711 / NCTC 7292 / S-41).